The following is a 27-amino-acid chain: uncharacterized protein (27 aa).

This is an uncharacterized protein from Saccharomyces cerevisiae (strain ATCC 204508 / S288c) (Baker's yeast).